Reading from the N-terminus, the 22-residue chain is Protein YncP (22 aa).

In Escherichia coli (strain K12), this protein is Protein YncP.